Reading from the N-terminus, the 404-residue chain is Argininosuccinate synthase (404 aa).

Residues A12–S20 and A40 contribute to the ATP site. L-citrulline contacts are provided by Y92 and S97. Residue G122 participates in ATP binding. L-aspartate-binding residues include T124, N128, and D129. N128 is a binding site for L-citrulline. L-citrulline is bound by residues R132, S181, S190, E266, and Y278.

It belongs to the argininosuccinate synthase family. Type 1 subfamily. In terms of assembly, homotetramer.

The protein resides in the cytoplasm. It catalyses the reaction L-citrulline + L-aspartate + ATP = 2-(N(omega)-L-arginino)succinate + AMP + diphosphate + H(+). It functions in the pathway amino-acid biosynthesis; L-arginine biosynthesis; L-arginine from L-ornithine and carbamoyl phosphate: step 2/3. In Erwinia tasmaniensis (strain DSM 17950 / CFBP 7177 / CIP 109463 / NCPPB 4357 / Et1/99), this protein is Argininosuccinate synthase.